A 916-amino-acid polypeptide reads, in one-letter code: Oxoglutarate dehydrogenase (916 aa).

This sequence belongs to the alpha-ketoglutarate dehydrogenase family. In terms of assembly, homodimer. Part of the 2-oxoglutarate dehydrogenase (OGDH) complex composed of E1 (2-oxoglutarate dehydrogenase), E2 (dihydrolipoamide succinyltransferase) and E3 (dihydrolipoamide dehydrogenase); the complex contains multiple copies of the three enzymatic components (E1, E2 and E3). Thiamine diphosphate is required as a cofactor.

It catalyses the reaction N(6)-[(R)-lipoyl]-L-lysyl-[protein] + 2-oxoglutarate + H(+) = N(6)-[(R)-S(8)-succinyldihydrolipoyl]-L-lysyl-[protein] + CO2. In terms of biological role, E1 component of the 2-oxoglutarate dehydrogenase (OGDH) complex which catalyzes the decarboxylation of 2-oxoglutarate, the first step in the conversion of 2-oxoglutarate to succinyl-CoA and CO(2). This chain is Oxoglutarate dehydrogenase (sucA), found in Buchnera aphidicola subsp. Baizongia pistaciae (strain Bp).